A 319-amino-acid polypeptide reads, in one-letter code: Acetyl-coenzyme A carboxylase carboxyl transferase subunit alpha (319 aa).

In terms of domain architecture, CoA carboxyltransferase C-terminal spans 35 to 296 (DLDKEIEQLE…KANLLRQLED (262 aa)).

It belongs to the AccA family. In terms of assembly, acetyl-CoA carboxylase is a heterohexamer composed of biotin carboxyl carrier protein (AccB), biotin carboxylase (AccC) and two subunits each of ACCase subunit alpha (AccA) and ACCase subunit beta (AccD).

It is found in the cytoplasm. It carries out the reaction N(6)-carboxybiotinyl-L-lysyl-[protein] + acetyl-CoA = N(6)-biotinyl-L-lysyl-[protein] + malonyl-CoA. It participates in lipid metabolism; malonyl-CoA biosynthesis; malonyl-CoA from acetyl-CoA: step 1/1. Functionally, component of the acetyl coenzyme A carboxylase (ACC) complex. First, biotin carboxylase catalyzes the carboxylation of biotin on its carrier protein (BCCP) and then the CO(2) group is transferred by the carboxyltransferase to acetyl-CoA to form malonyl-CoA. This Vibrio campbellii (strain ATCC BAA-1116) protein is Acetyl-coenzyme A carboxylase carboxyl transferase subunit alpha.